The following is an 88-amino-acid chain: Small ribosomal subunit protein uS15 (88 aa).

It belongs to the universal ribosomal protein uS15 family. As to quaternary structure, part of the 30S ribosomal subunit. Forms a bridge to the 50S subunit in the 70S ribosome, contacting the 23S rRNA.

Its function is as follows. One of the primary rRNA binding proteins, it binds directly to 16S rRNA where it helps nucleate assembly of the platform of the 30S subunit by binding and bridging several RNA helices of the 16S rRNA. Functionally, forms an intersubunit bridge (bridge B4) with the 23S rRNA of the 50S subunit in the ribosome. This is Small ribosomal subunit protein uS15 from Leptospira biflexa serovar Patoc (strain Patoc 1 / Ames).